Here is a 483-residue protein sequence, read N- to C-terminus: Cobyric acid synthase (483 aa).

The GATase cobBQ-type domain maps to 251–438; the sequence is ALIVAVPMLP…LHGVFSADRF (188 aa). Cys333 serves as the catalytic Nucleophile. Residue His430 is part of the active site.

The protein belongs to the CobB/CobQ family. CobQ subfamily.

It functions in the pathway cofactor biosynthesis; adenosylcobalamin biosynthesis. Functionally, catalyzes amidations at positions B, D, E, and G on adenosylcobyrinic A,C-diamide. NH(2) groups are provided by glutamine, and one molecule of ATP is hydrogenolyzed for each amidation. The protein is Cobyric acid synthase of Brucella melitensis biotype 2 (strain ATCC 23457).